The chain runs to 612 residues: UvrABC system protein C (612 aa).

Residues 11–90 enclose the GIY-YIG domain; that stretch reads TASGVYLMKG…IKKYRPRYNI (80 aa). The UVR domain maps to 200–235; it reads SEVVESLQHQMAAAAERMAFEEAARLRDQLRAIEQT.

Belongs to the UvrC family. As to quaternary structure, interacts with UvrB in an incision complex.

Its subcellular location is the cytoplasm. The UvrABC repair system catalyzes the recognition and processing of DNA lesions. UvrC both incises the 5' and 3' sides of the lesion. The N-terminal half is responsible for the 3' incision and the C-terminal half is responsible for the 5' incision. This chain is UvrABC system protein C, found in Syntrophotalea carbinolica (strain DSM 2380 / NBRC 103641 / GraBd1) (Pelobacter carbinolicus).